A 382-amino-acid polypeptide reads, in one-letter code: MSSFLSKRFLSFSQRAMSQESLKFKSLIYSSHDSQDCTKVLKVHNYKPKKGSETSIVLKTLAFPINPSDINQLEGVYPSKPDKVTDYSTDEPSAIAGNEGVFEVVSVPSSVSTLKPGDKVIPLQANFGTWSTYRTCDKESDLIKIEGVDIYTAATVAVNGCTAYQLVNDYINWDPKGNDWLVQNAGTSSVSKIVTQIAKAKNINTLSVIRDRENFEEVAEILEKKYGATKVISETENGEKEFGKEVLPKVLGSNAQVKLALNSVGGKSCANIARKLSKDGLMLTYGGMSKQPLTFPTGLFIFKGLKSHGFWVTENSKRDPENKIKTVNEVIELYRDGKIISPKEDIRALEWDVNNASDEEVLQLITDGIKTKGTKNMVILKW.

The transit peptide at 1-17 (MSSFLSKRFLSFSQRAM) directs the protein to the mitochondrion. Residue Tyr-77 is the Proton donor of the active site. NADP(+) is bound by residues Asn-159, 187-190 (TSSV), 210-212 (RDR), 285-288 (YGGM), 310-312 (FWV), and Lys-375.

Belongs to the zinc-containing alcohol dehydrogenase family. Quinone oxidoreductase subfamily. As to quaternary structure, homodimer.

The protein resides in the mitochondrion matrix. The catalysed reaction is a 2,3-saturated acyl-[ACP] + NADP(+) = a (2E)-enoyl-[ACP] + NADPH + H(+). In terms of biological role, catalyzes the NADPH-dependent reduction of trans-2-enoyl thioesters in mitochondrial fatty acid synthesis (fatty acid synthesis type II). Fatty acid chain elongation in mitochondria uses acyl carrier protein (ACP) as an acyl group carrier, but the enzyme accepts both ACP and CoA thioesters as substrates in vitro. Required for respiration and the maintenance of the mitochondrial compartment. In Kluyveromyces lactis (strain ATCC 8585 / CBS 2359 / DSM 70799 / NBRC 1267 / NRRL Y-1140 / WM37) (Yeast), this protein is Enoyl-[acyl-carrier-protein] reductase, mitochondrial (ETR1).